Consider the following 640-residue polypeptide: Auxin efflux carrier component 3 (640 aa).

The Extracellular segment spans residues 1 to 7 (MISWHDL). Residues 8–28 (YTVLTAVIPLYVAMILAYGSV) traverse the membrane as a helical segment. At 29 to 38 (RWWKIFSPDQ) the chain is on the cytoplasmic side. Residues 39 to 59 (CSGINRFVAIFAVPLLSFHFI) traverse the membrane as a helical segment. Val-51 provides a ligand contact to (indol-3-yl)acetate. The Extracellular portion of the chain corresponds to 60-71 (STNNPYAMNLRF). The chain crosses the membrane as a helical span at residues 72–92 (IAADTLQKIIMLSLLVLWANF). Residues 93 to 101 (TRSGSLEWS) lie on the Cytoplasmic side of the membrane. A helical transmembrane segment spans residues 102 to 122 (ITIFSLSTLPNTLVMGIPLLI). 2 residues coordinate (indol-3-yl)acetate: Asn-112 and Leu-114. The Extracellular segment spans residues 123 to 131 (AMYGEYSGS). A helical transmembrane segment spans residues 132–152 (LMVQIVVLQCIIWYTLLLFLF). Tyr-145 is a binding site for (indol-3-yl)acetate. Topologically, residues 153–500 (EFRGAKMLIM…LIRNPNTYSS (348 aa)) are cytoplasmic. 3 positions are modified to phosphoserine: Ser-226, Ser-243, and Ser-283. Residues 310–351 (APNPEFSSTTTSTANKSVNKNPKDVNTNQQTTLPTGGKSNSH) form a disordered region. Residues 314–348 (EFSSTTTSTANKSVNKNPKDVNTNQQTTLPTGGKS) show a composition bias toward polar residues. Thr-322 is subject to Phosphothreonine. The residue at position 366 (Ser-366) is a Phosphoserine. Disordered regions lie at residues 372–391 (AGLN…RSDQ) and 404–471 (SHNG…SQRK). Over residues 430–442 (GKEEEAERPKDAE) the composition is skewed to basic and acidic residues. Residues 449–460 (APNSTAALQSKT) show a composition bias toward polar residues. Residues 501 to 521 (LIGLIWALVAFRWHVAMPKII) form a helical membrane-spanning segment. Residues 522-524 (QQS) are Extracellular-facing. Residues 525–545 (ISILSDAGLGMAMFSLGLFMA) traverse the membrane as a helical segment. The Cytoplasmic portion of the chain corresponds to 546–559 (LQPKLIACGNSVAT). Residues 560–580 (FAMAVRFLTGPAVMAVAAIAI) traverse the membrane as a helical segment. The Extracellular portion of the chain corresponds to 581-585 (GLRGD). The chain crosses the membrane as a helical span at residues 586 to 606 (LLRVAIVQAALPQGIVPFVFA). Positions 600 and 601 each coordinate (indol-3-yl)acetate. Over 607–619 (KEYNVHPAILSTG) the chain is Cytoplasmic. The helical transmembrane segment at 620–640 (VIFGMLIALPITLVYYILLGL) threads the bilayer.

Belongs to the auxin efflux carrier (TC 2.A.69.1) family. In terms of assembly, homodimer. As to expression, predominantly expressed at the lateral side of shoot endodermis cells as well as root pericycle and columella cells.

Its subcellular location is the cell membrane. Its activity is regulated as follows. Auxin efflux carrier activity is competitively inhibited by naptalamate (N-1-naphthylphthalamic acid, NPA). Functionally, acts as a component of the auxin efflux carrier; this activity is enhanced when activated by PID-mediated phosphorylation. Seems to be involved in the lateral auxin transport system. Together with PIN4 and PIN7, involved in the connective auxin transport (CAT) that ensures communication across the shoot system, and modulates strigolactone-mediated shoot branching control. Binds auxins including indole-3-acetic acid (IAA). Coordinated polar localization of PIN3 is directly regulated by the vesicle trafficking process. This Arabidopsis thaliana (Mouse-ear cress) protein is Auxin efflux carrier component 3.